Reading from the N-terminus, the 379-residue chain is Elongation factor Ts, mitochondrial (379 aa).

The N-terminal 33 residues, 1-33 (MAWGQGAKRSILGLLFRSQHQTARAYSSSAFQT), are a transit peptide targeting the mitochondrion.

This sequence belongs to the EF-Ts family.

It is found in the mitochondrion. Associates with the EF-Tu.GDP complex and induces the exchange of GDP to GTP. It remains bound to the aminoacyl-tRNA.EF-Tu.GTP complex up to the GTP hydrolysis stage on the ribosome. The protein is Elongation factor Ts, mitochondrial of Zea mays (Maize).